Here is a 619-residue protein sequence, read N- to C-terminus: Guanylate cyclase soluble subunit beta-1 (619 aa).

Residue His-105 coordinates heme. The 134-residue stretch at 421–554 (TILFSGIVGF…NTVNLTSRTE (134 aa)) folds into the Guanylate cyclase domain.

This sequence belongs to the adenylyl cyclase class-4/guanylyl cyclase family. The active enzyme is formed by a heterodimer of an alpha and a beta subunit. Heterodimer with GUCY1A1. Can also form inactive homodimers in vitro. Heme serves as cofactor. In terms of tissue distribution, lung and brain.

Its subcellular location is the cytoplasm. It catalyses the reaction GTP = 3',5'-cyclic GMP + diphosphate. With respect to regulation, activated by nitric oxide in the presence of magnesium or manganese ions, binding of NO to the heme iron increases catalytic activity up to 400 folds. Mediates responses to nitric oxide (NO) by catalyzing the biosynthesis of the signaling molecule cGMP. This Bos taurus (Bovine) protein is Guanylate cyclase soluble subunit beta-1 (GUCY1B1).